Reading from the N-terminus, the 862-residue chain is Alpha,alpha-trehalose-phosphate synthase [UDP-forming] 5 (862 aa).

Position 5 is a phosphoserine (S5). T32 is modified (phosphothreonine). The tract at residues 60-546 (DRIIIVGNQL…ARSFIQDLER (487 aa)) is glycosyltransferase.

This sequence in the N-terminal section; belongs to the glycosyltransferase 20 family. It in the C-terminal section; belongs to the trehalose phosphatase family. In terms of assembly, binds to the phosphopeptide-binding site of GRF/14-3-3 and to MBF1c. In terms of processing, both Ser-5 and Thr-32 must be phosphorylated for binding to GRF/14-3-3. As to expression, low expression in leaves, stems, flower buds, flowers and siliques.

It catalyses the reaction D-glucose 6-phosphate + UDP-alpha-D-glucose = alpha,alpha-trehalose 6-phosphate + UDP + H(+). This chain is Alpha,alpha-trehalose-phosphate synthase [UDP-forming] 5 (TPS5), found in Arabidopsis thaliana (Mouse-ear cress).